The primary structure comprises 481 residues: MQLLPEGQLRLCVFQPVHLTSGLLILFILKSISSLKPARLPVYQRKPFIAAWNAPTDLCLIKYNLTLNLKVFQMVGSPRLKDRGQNVVIFYANRLGYYPWYTSEGVPINGGLPQNTSLQVHLKKAAQDINYYIPSENFSGLAVIDWEYWRPQWARNWNTKDIYRQKSRTLISDMKENISAADIEYSAKATFEKSAKAFMEETIKLGSKSRPKGLWGYYLYPDCHNYNVYATNYTGSCPEEEVLRNNDLSWLWNSSTALYPAVSIRKSFADSENTLHFSRFRVRESLRISTMTSQDYALPVFVYTQLGYKEEPLLFLSKQDLISTIGESAALGAAGIVVWGDMNLTSSEENCTKVNRFVNSDFGSYIINVTRAAEVCSRHLCKNNGRCVRKTWKAAHYLHLNPASYHIEASEDGEFIVRGRASDTDLAVMAENFLCHCYEGYEGADCREMTEASGPSGLSLSSSSVITLCLLVLAGYQSIQL.

Over Met1–Leu11 the chain is Cytoplasmic. Residues Cys12–Ile32 form a helical membrane-spanning segment. Residues Ser33 to Pro455 are Extracellular-facing. 5 cysteine pairs are disulfide-bonded: Cys59/Cys351, Cys223/Cys237, Cys376/Cys387, Cys381/Cys435, and Cys437/Cys446. N-linked (GlcNAc...) asparagine glycans are attached at residues Asn64 and Asn115. Glu147 (proton donor) is an active-site residue. N-linked (GlcNAc...) asparagine glycosylation is found at Asn232 and Asn343. Residues Ser456–Tyr476 traverse the membrane as a helical segment. Residues Gln477–Leu481 lie on the Cytoplasmic side of the membrane.

This sequence belongs to the glycosyl hydrolase 56 family.

Its subcellular location is the membrane. It catalyses the reaction Random hydrolysis of (1-&gt;4)-linkages between N-acetyl-beta-D-glucosamine and D-glucuronate residues in hyaluronate.. In terms of biological role, endo-hyaluronidase that degrades hyaluronan to smaller oligosaccharide fragments. Also has chondroitin sulfate hydrolase activity, The best substrate being the galactosaminidic linkage in the sequence of a trisulfated tetrasaccharide. The chain is Hyaluronidase-4 (Hyal4) from Mus musculus (Mouse).